Consider the following 274-residue polypeptide: MAIHLYKTSTPGTRNGAVDSQVKSNPRNNLIYGQHRCGKGRNARGIITARHRGGGHKRLYRKIDFRRNEKDIYGRIVTIEYDPNRNAYICLIHYGDGEKRYILHPRGAIIGDTIVSGTEVPIKMGNALPLTDMPLGTAIHNIEITLGRGGQLARAAGAVAKLIAKEGKSATLKLPSGEVRLISKNCSATVGQVGNVGVNQKSLGRAGSKCWLGKRPVVRGVVMNPVDHPHGGGEGRAPIGRKKPATPWGYPALGRRSRKRNKYSDNLILRRRSK.

2 disordered regions span residues 1 to 21 (MAIH…VDSQ) and 224 to 274 (NPVD…RRSK).

It belongs to the universal ribosomal protein uL2 family. Part of the 50S ribosomal subunit.

Its subcellular location is the plastid. It is found in the chloroplast. The polypeptide is Large ribosomal subunit protein uL2cz/uL2cy (rpl2-A) (Gossypium hirsutum (Upland cotton)).